A 276-amino-acid chain; its full sequence is Undecaprenyl-diphosphatase 1 (276 aa).

The next 6 helical transmembrane spans lie at 44–63 (ALAF…IWEY), 85–105 (VNLL…ADLI), 109–129 (LFNP…MLWA), 183–203 (AATE…AVYS), 214–234 (GDFA…MLAV), and 249–269 (FAWY…LGMI).

It belongs to the UppP family.

It localises to the cell inner membrane. The catalysed reaction is di-trans,octa-cis-undecaprenyl diphosphate + H2O = di-trans,octa-cis-undecaprenyl phosphate + phosphate + H(+). Catalyzes the dephosphorylation of undecaprenyl diphosphate (UPP). Confers resistance to bacitracin. In Stutzerimonas stutzeri (strain A1501) (Pseudomonas stutzeri), this protein is Undecaprenyl-diphosphatase 1.